The following is a 293-amino-acid chain: Bis(5'-nucleosyl)-tetraphosphatase, symmetrical (293 aa).

Belongs to the Ap4A hydrolase family.

It catalyses the reaction P(1),P(4)-bis(5'-adenosyl) tetraphosphate + H2O = 2 ADP + 2 H(+). In terms of biological role, hydrolyzes diadenosine 5',5'''-P1,P4-tetraphosphate to yield ADP. The polypeptide is Bis(5'-nucleosyl)-tetraphosphatase, symmetrical (Pseudomonas fluorescens (strain Pf0-1)).